The sequence spans 210 residues: Guanylate kinase (210 aa).

The Guanylate kinase-like domain maps to Gly8–Leu188. Residue Ala15–Ser22 coordinates ATP.

This sequence belongs to the guanylate kinase family.

It localises to the cytoplasm. The catalysed reaction is GMP + ATP = GDP + ADP. Its function is as follows. Essential for recycling GMP and indirectly, cGMP. The chain is Guanylate kinase from Idiomarina loihiensis (strain ATCC BAA-735 / DSM 15497 / L2-TR).